Here is a 443-residue protein sequence, read N- to C-terminus: Light-independent protochlorophyllide reductase subunit N (443 aa).

[4Fe-4S] cluster-binding residues include cysteine 15, cysteine 40, and cysteine 99.

It belongs to the BchN/ChlN family. As to quaternary structure, protochlorophyllide reductase is composed of three subunits; BchL, BchN and BchB. Forms a heterotetramer of two BchB and two BchN subunits. Requires [4Fe-4S] cluster as cofactor.

It carries out the reaction chlorophyllide a + oxidized 2[4Fe-4S]-[ferredoxin] + 2 ADP + 2 phosphate = protochlorophyllide a + reduced 2[4Fe-4S]-[ferredoxin] + 2 ATP + 2 H2O. Its pathway is porphyrin-containing compound metabolism; bacteriochlorophyll biosynthesis (light-independent). Functionally, component of the dark-operative protochlorophyllide reductase (DPOR) that uses Mg-ATP and reduced ferredoxin to reduce ring D of protochlorophyllide (Pchlide) to form chlorophyllide a (Chlide). This reaction is light-independent. The NB-protein (BchN-BchB) is the catalytic component of the complex. The protein is Light-independent protochlorophyllide reductase subunit N of Heliobacterium modesticaldum (strain ATCC 51547 / Ice1).